Consider the following 179-residue polypeptide: Ribosome-recycling factor (179 aa).

It belongs to the RRF family.

Its subcellular location is the cytoplasm. Its function is as follows. Responsible for the release of ribosomes from messenger RNA at the termination of protein biosynthesis. May increase the efficiency of translation by recycling ribosomes from one round of translation to another. The protein is Ribosome-recycling factor of Chlamydia trachomatis serovar L2b (strain UCH-1/proctitis).